We begin with the raw amino-acid sequence, 527 residues long: Peptide chain release factor 3 (527 aa).

One can recognise a tr-type G domain in the interval 9-277; it reads AKRRTFAIIS…AVVNWAPKPL (269 aa). GTP contacts are provided by residues 18 to 25, 86 to 90, and 140 to 143; these read SHPDAGKT, DTPGH, and NKLD.

The protein belongs to the TRAFAC class translation factor GTPase superfamily. Classic translation factor GTPase family. PrfC subfamily.

It localises to the cytoplasm. Increases the formation of ribosomal termination complexes and stimulates activities of RF-1 and RF-2. It binds guanine nucleotides and has strong preference for UGA stop codons. It may interact directly with the ribosome. The stimulation of RF-1 and RF-2 is significantly reduced by GTP and GDP, but not by GMP. This chain is Peptide chain release factor 3, found in Pseudomonas savastanoi pv. phaseolicola (strain 1448A / Race 6) (Pseudomonas syringae pv. phaseolicola (strain 1448A / Race 6)).